The sequence spans 360 residues: GDP-mannose transporter (360 aa).

Topologically, residues 1–49 are cytoplasmic; the sequence is MSSSETKGRNEEDVAEIKKAIATGAVKDPSNLSAIPPIFVVSGANFSMN. A helical transmembrane segment spans residues 50-67; sequence FLLLCIQSSVCCACVFAV. At 68 to 84 the chain is on the lumenal side; the sequence is KKLGIISFRDFDMKDAK. Residues 85 to 105 traverse the membrane as a helical segment; that stretch reads MWFPISFLLVSVIYTGSKSLQ. Over 106-110 the chain is Cytoplasmic; that stretch reads YLSIP. The helical transmembrane segment at 111 to 131 threads the bilayer; it reads VYTIFKNLTIILIAYGEVLWF. The Lumenal portion of the chain corresponds to 132-134; the sequence is GGR. The helical transmembrane segment at 135–155 threads the bilayer; that stretch reads VTALTFVSFIFMVISSIIAAW. The Cytoplasmic segment spans residues 156 to 164; that stretch reads SDVQSALAS. A helical membrane pass occupies residues 165–185; it reads SIPGASSGVSVGAMQSLFGAL. Position 186 (Arg186) is a topological domain, lumenal. Residues 187 to 207 form a helical membrane-spanning segment; sequence GLNVGYFWMLVNCLTSAAYVL. Residues 208–220 are Cytoplasmic-facing; the sequence is SMRKRIKSTGFSD. The helical transmembrane segment at 221-241 threads the bilayer; the sequence is WDTMFYNNLLSIPVLAVFSLI. Residues 242–260 lie on the Lumenal side of the membrane; sequence AEDWGRENLNRNFPAETRN. A helical transmembrane segment spans residues 261-281; sequence FLLFAIAFSGAAAVGISYTTA. The Cytoplasmic portion of the chain corresponds to 282–291; that stretch reads WCVRVTSSTT. The helical transmembrane segment at 292–312 threads the bilayer; that stretch reads YSMVGALNKLPVAASGMLFFG. The Lumenal portion of the chain corresponds to 313-314; the sequence is DP. A helical transmembrane segment spans residues 315-335; sequence VTVGSVSAVGVGFFAGIVYAV. The Cytoplasmic portion of the chain corresponds to 336–360; the sequence is AKNNQKKNERRQAADAIIPMASRKP.

The protein belongs to the TPT transporter family. SLC35D subfamily. As to quaternary structure, homooligomer.

The protein localises to the golgi apparatus membrane. It localises to the cytoplasmic vesicle membrane. Its subcellular location is the endoplasmic reticulum membrane. In terms of biological role, involved in the import of GDP-mannose from the cytoplasm into the Golgi lumen. This Coprinopsis cinerea (strain Okayama-7 / 130 / ATCC MYA-4618 / FGSC 9003) (Inky cap fungus) protein is GDP-mannose transporter (VRG4).